The following is a 583-amino-acid chain: MDNKEKEDEELSDELKDQPGPSEKPRTPTVVAFTKPSFYRVNTVISDVKVCRSMSYDMCGNHQQELLFDLYKDETTGKVYLPRFFKALLESGIRKDDPRIDKMIQNIKDADLLDDFVWGTQHIYLEKDTFKRYIGSSIGVVTKALKKQMIIPDWERFVSDMGEIFEDVRSHNEGDLATYIPQLSRVAPDSWAMSVCTIDGQRKMWGDALKPFCLQSVSKPFTYALVHDDIGPEELHAHVGQEPSGRLFNDISLDHNKKPHNPLINAGAIVVASLLKNKLPLADRFDFMIHACRKFVGSGYIGFDNSVFLSERETADRNYALSYYMREHKVFPKDLNLQDTLDLYFQICSIETNCDSLAVMAATLANGGVNPMNGERIVNNRACRDTLSLMYSCGMYDWSGQFAFHVGLPAKSGVSGDMIIVIPNVMGIALYSPRLDKLGNTVRGVKFAEQLVQKYNFHNYDSLIYSDNKKIDPRRQLKDDHDGQNRFMYATKLGDIAAIKRFLLMGHDIHCKDYDDRTVLHVAAAEGDVVTLEYVLSKWQEDPNPCDRYDRTPLDDAKHFNHTACVKLLEEAITVYNLKGQDD.

The interval 1–29 (MDNKEKEDEELSDELKDQPGPSEKPRTPT) is disordered. Ser216, Asn265, Glu311, Asn318, Tyr344, Tyr396, and Val414 together coordinate substrate. 3 ANK repeats span residues 482–514 (DGQN…CKDY), 515–548 (DDRT…PCDR), and 549–581 (YDRT…LKGQ).

Belongs to the glutaminase family.

It catalyses the reaction L-glutamine + H2O = L-glutamate + NH4(+). This is Putative glutaminase 3 (glna-3) from Caenorhabditis elegans.